The sequence spans 170 residues: Peptide deformylase 1 (170 aa).

Fe cation is bound by residues Cys91 and His133. The active site involves Glu134. Residue His137 coordinates Fe cation.

This sequence belongs to the polypeptide deformylase family. The cofactor is Fe(2+).

It catalyses the reaction N-terminal N-formyl-L-methionyl-[peptide] + H2O = N-terminal L-methionyl-[peptide] + formate. Removes the formyl group from the N-terminal Met of newly synthesized proteins. Requires at least a dipeptide for an efficient rate of reaction. N-terminal L-methionine is a prerequisite for activity but the enzyme has broad specificity at other positions. This Vibrio vulnificus (strain CMCP6) protein is Peptide deformylase 1.